Reading from the N-terminus, the 144-residue chain is L-fucose mutarotase (144 aa).

H22 (proton donor) is an active-site residue. Substrate-binding positions include D30, R109, and 131–133 (YGN).

This sequence belongs to the RbsD / FucU family. FucU mutarotase subfamily. In terms of assembly, homodecamer.

The protein resides in the cytoplasm. It catalyses the reaction alpha-L-fucose = beta-L-fucose. It functions in the pathway carbohydrate metabolism; L-fucose metabolism. Its function is as follows. Involved in the anomeric conversion of L-fucose. In Histophilus somni (strain 129Pt) (Haemophilus somnus), this protein is L-fucose mutarotase.